Here is a 592-residue protein sequence, read N- to C-terminus: Protein alan shepard (592 aa).

A disordered region spans residues 1–68; the sequence is MGGPHHQHQQ…ASVAAAPPTP (68 aa). Residues 18-28 show a composition bias toward gly residues; the sequence is VGGGNGHGGGA. Residues 36 to 54 show a composition bias toward polar residues; it reads PNSQQLPPQMPRSQNYANG. Over residues 55-64 the composition is skewed to low complexity; that stretch reads SSSAASVAAA. Phosphotyrosine is present on residues Tyr124 and Tyr140. Positions 162-224 are disordered; it reads PATTTYGQRV…AQNQNQQGGE (63 aa). The span at 176–224 shows a compositional bias: low complexity; sequence SPSNTNSSSSSNTGSQSGTLSTSLSNTTNTNTTMGPNGTAQNQNQQGGE. 2 RRM domains span residues 229-307 and 319-398; these read TNLY…IWVL and TNLY…FADG. Positions 565-592 are disordered; the sequence is PMTDSEQASTAASPDEAYTQYPHQAAPK.

Has a role in the perception of gravity. The sequence is that of Protein alan shepard from Drosophila mojavensis (Fruit fly).